Here is a 703-residue protein sequence, read N- to C-terminus: MAIGDRAMFTVLLLFIASISGFSVVRCVTDPSDVQALQVLYTSLNSPSQLTNWKNGGGDPCGESWKGITCEGSAVVTIDISDLGVSGTLGYLLSDLKSLRKLDVSGNSIHDTLPYQLPPNLTSLNLARNNLSGNLPYSISAMGSLSYMNVSGNSLTMSIGDIFADHKSLATLDLSHNNFSGDLPSSLSTVSTLSVLYVQNNQLTGSIDVLSGLPLKTLNVANNHFNGSIPKELSSIQTLIYDGNSFDNVPASPQPERPGKKETPSGSKKPKIGSEEKSSDSGKGLSGGVVTGIVFGSLFVAGIIALVLYLCLHKKKRKVRGSTRASQRSLPLSGTPEVQEQRVKSVASVADLKSSPAEKVTVDRVMKNGSISRIRSPITASQYTVSSLQVATNSFSQENIIGEGSLGRVYRAEFPNGKIMAIKKIDNAALSLQEEDNFLEAVSNMSRLRHPNIVPLAGYCTEHGQRLLVYEYVGNGNLDDTLHTNDDRSMNLTWNARVKVALGTAKALEYLHEVCLPSIVHRNFKSANILLDEELNPHLSDSGLAALTPNTERQVSTQVVGSFGYSAPEFALSGIYTVKSDVYTFGVVMLELLTGRKPLDSSRTRAEQSLVRWATPQLHDIDALSKMVDPSLNGMYPAKSLSRFADIIALCIQPEPEFRPPMSEVVQQLVRLVQRASVVKRRSSDDTGFSYRTPEHEHVDISF.

The N-terminal stretch at 1–27 (MAIGDRAMFTVLLLFIASISGFSVVRC) is a signal peptide. The Extracellular portion of the chain corresponds to 28–291 (VTDPSDVQAL…GKGLSGGVVT (264 aa)). LRR repeat units follow at residues 96–120 (LKSL…LPPN), 122–142 (TSLN…ISAM), 143–165 (GSLS…IFAD), 166–190 (HKSL…LSTV), 192–212 (TLSV…VLSG), 213–233 (LPLK…PKEL), and 234–256 (SSIQ…PQPE). 4 N-linked (GlcNAc...) asparagine glycosylation sites follow: Asn120, Asn130, Asn149, and Asn178. Asn226 is a glycosylation site (N-linked (GlcNAc...) asparagine). The interval 247–284 (DNVPASPQPERPGKKETPSGSKKPKIGSEEKSSDSGKG) is disordered. A helical transmembrane segment spans residues 292 to 312 (GIVFGSLFVAGIIALVLYLCL). Topologically, residues 313–703 (HKKKRKVRGS…PEHEHVDISF (391 aa)) are cytoplasmic. In terms of domain architecture, Protein kinase spans 395–672 (FSQENIIGEG…SEVVQQLVRL (278 aa)). Residues 401–409 (IGEGSLGRV) and Lys423 each bind ATP.

Belongs to the protein kinase superfamily. Ser/Thr protein kinase family. As to expression, expressed in seedlings, roots, stems, leaves, flowers and siliques.

It is found in the membrane. This is Protein STRUBBELIG-RECEPTOR FAMILY 8 (SRF8) from Arabidopsis thaliana (Mouse-ear cress).